The sequence spans 129 residues: Protein LLP homolog (129 aa).

Over residues 1–21 (MAKSLRSKWKRKMRAEKRKKN) the composition is skewed to basic residues. The tract at residues 1–27 (MAKSLRSKWKRKMRAEKRKKNAPKEAS) is disordered. Glycyl lysine isopeptide (Lys-Gly) (interchain with G-Cter in SUMO2) cross-links involve residues K67 and K74. Basic residues predominate over residues 100-122 (RQRKRLKAKREKRKGKSKAKAVK). Residues 100–129 (RQRKRLKAKREKRKGKSKAKAVKVAKGLAW) form a disordered region.

The protein belongs to the learning-associated protein family. As to quaternary structure, interacts with CTCF, MYO1C and with the transcriptional machinery, including RNA polymerase II and TBP.

The protein localises to the nucleus. It is found in the nucleolus. The protein resides in the chromosome. Its function is as follows. In hippocampal neurons, regulates dendritic and spine growth and synaptic transmission. The chain is Protein LLP homolog (LLPH) from Homo sapiens (Human).